The following is a 347-amino-acid chain: N-acetyl-gamma-glutamyl-phosphate reductase (347 aa).

The active site involves Cys152.

The protein belongs to the NAGSA dehydrogenase family. Type 1 subfamily.

It localises to the cytoplasm. It carries out the reaction N-acetyl-L-glutamate 5-semialdehyde + phosphate + NADP(+) = N-acetyl-L-glutamyl 5-phosphate + NADPH + H(+). It functions in the pathway amino-acid biosynthesis; L-arginine biosynthesis; N(2)-acetyl-L-ornithine from L-glutamate: step 3/4. In terms of biological role, catalyzes the NADPH-dependent reduction of N-acetyl-5-glutamyl phosphate to yield N-acetyl-L-glutamate 5-semialdehyde. The sequence is that of N-acetyl-gamma-glutamyl-phosphate reductase from Neisseria meningitidis serogroup C (strain 053442).